We begin with the raw amino-acid sequence, 706 residues long: Dihydroxyacetone synthase (706 aa).

Thiamine diphosphate is bound by residues His-76 and 126-128 (GPL). Residues Asp-167, Asn-197, and Val-199 each contribute to the Mg(2+) site. Asn-197 contacts thiamine diphosphate. Thiamine diphosphate-binding residues include His-273, Glu-431, and Phe-459. The active-site Proton donor is Glu-431. A Microbody targeting signal motif is present at residues 704 to 706 (NHL).

This sequence belongs to the transketolase family. The cofactor is Mg(2+). Ca(2+) serves as cofactor. It depends on Mn(2+) as a cofactor. Requires Co(2+) as cofactor. Thiamine diphosphate is required as a cofactor.

The protein resides in the peroxisome. It catalyses the reaction D-xylulose 5-phosphate + formaldehyde = dihydroxyacetone + D-glyceraldehyde 3-phosphate. Its function is as follows. Involved in assimilation of formaldehyde. This chain is Dihydroxyacetone synthase (DAS1), found in Candida boidinii (Yeast).